The sequence spans 735 residues: Stonin-1 (735 aa).

Positions 1–35 are disordered; the sequence is MCSTNPGKWVTFDDDPAVQSSQKSKNFPLENQGVC. The 134-residue stretch at 275-408 folds into the SHD domain; the sequence is GWSFMLRIPE…KLPAVSKPKK (134 aa). An MHD domain is found at 412 to 715; the sequence is EQEISLEIVD…ACYNIQVEIE (304 aa).

Belongs to the Stoned B family. Ubiquitous.

It localises to the cytoplasm. The protein resides in the membrane. Functionally, may be involved in the endocytic machinery. This chain is Stonin-1 (STON1), found in Homo sapiens (Human).